The primary structure comprises 690 residues: Elongation factor G (690 aa).

Residues 8–283 (EDYRNFGIMA…AVVDYLPSPV (276 aa)) form the tr-type G domain. GTP contacts are provided by residues 17–24 (AHIDAGKT), 81–85 (DTPGH), and 135–138 (NKMD).

This sequence belongs to the TRAFAC class translation factor GTPase superfamily. Classic translation factor GTPase family. EF-G/EF-2 subfamily.

It localises to the cytoplasm. Its function is as follows. Catalyzes the GTP-dependent ribosomal translocation step during translation elongation. During this step, the ribosome changes from the pre-translocational (PRE) to the post-translocational (POST) state as the newly formed A-site-bound peptidyl-tRNA and P-site-bound deacylated tRNA move to the P and E sites, respectively. Catalyzes the coordinated movement of the two tRNA molecules, the mRNA and conformational changes in the ribosome. This Rhodopseudomonas palustris (strain BisA53) protein is Elongation factor G.